The chain runs to 172 residues: uncharacterized protein (172 aa).

In terms of domain architecture, HotDog ACOT-type spans 10-122; sequence KESKVVKTSR…FLTFVALDSN (113 aa). Residues 148-172 form a disordered region; that stretch reads RANERKNRKRHSQALANALGTDKPW.

It belongs to the acyl coenzyme A hydrolase family.

This is an uncharacterized protein from Bacillus subtilis (strain 168).